The sequence spans 495 residues: Fibronectin type III and SPRY domain-containing protein 1 (495 aa).

Residues 4–99 (QKESLRKIIT…ALESSEELLE (96 aa)) are a coiled coil. Residues 105–162 (LCSSENDSFTQAAKDIKDSVTMAPAFRLSLKAKASDSMNHMMVDFTHERNLLQSITFL) form the COS domain. The Fibronectin type-III domain maps to 164–268 (VPATPEIHVA…EPVTLETHAF (105 aa)). The B30.2/SPRY domain occupies 281-476 (LKVEDLSVEW…VQTGLQVPSI (196 aa)). The disordered stretch occupies residues 306–332 (KNRTNSPMHSPARTAMMSPKRAPSARV). Residue serine 490 is modified to Phosphoserine.

Oligomerization is required for binding to microtubules.

It localises to the cytoplasm. The protein resides in the cytoskeleton. It is found in the microtubule organizing center. The protein localises to the centrosome. Its subcellular location is the nucleus. It localises to the cleavage furrow. Its function is as follows. May be involved in microtubule organization and stabilization. This chain is Fibronectin type III and SPRY domain-containing protein 1 (fsd1), found in Danio rerio (Zebrafish).